The sequence spans 489 residues: Betaine aldehyde dehydrogenase (489 aa).

K(+) contacts are provided by Thr26 and Asp93. 150–152 contacts NAD(+); it reads GAW. The Charge relay system role is filled by Lys162. NAD(+) is bound at residue 176-179; the sequence is KPSE. Val180 is a binding site for K(+). An NAD(+)-binding site is contributed by 229 to 232; sequence GVET. Leu245 is a K(+) binding site. The Proton acceptor role is filled by Glu251. Gly253, Cys285, and Glu386 together coordinate NAD(+). Cys285 (nucleophile) is an active-site residue. Cysteine sulfenic acid (-SOH) is present on Cys285. K(+)-binding residues include Lys456 and Gly459. The active-site Charge relay system is the Glu463.

It belongs to the aldehyde dehydrogenase family. Dimer of dimers. It depends on K(+) as a cofactor.

It catalyses the reaction betaine aldehyde + NAD(+) + H2O = glycine betaine + NADH + 2 H(+). It functions in the pathway amine and polyamine biosynthesis; betaine biosynthesis via choline pathway; betaine from betaine aldehyde: step 1/1. Involved in the biosynthesis of the osmoprotectant glycine betaine. Catalyzes the irreversible oxidation of betaine aldehyde to the corresponding acid. This Burkholderia ambifaria (strain MC40-6) protein is Betaine aldehyde dehydrogenase.